Reading from the N-terminus, the 311-residue chain is Pyrimidine-specific ribonucleoside hydrolase RihA (311 aa).

His240 is a catalytic residue.

This sequence belongs to the IUNH family. RihA subfamily.

In terms of biological role, hydrolyzes cytidine or uridine to ribose and cytosine or uracil, respectively. The chain is Pyrimidine-specific ribonucleoside hydrolase RihA from Salmonella newport (strain SL254).